The primary structure comprises 356 residues: Arginine kinase (356 aa).

Residue Ala2 is modified to N-acetylalanine. One can recognise a Phosphagen kinase N-terminal domain in the interval 9–91 (KLEEGFKKLE…FDPIIEDYHK (83 aa)). 64 to 68 (GVGIY) serves as a coordination point for L-arginine. One can recognise a Phosphagen kinase C-terminal domain in the interval 119 to 356 (FVISTRVRCG…LELIKIEKEM (238 aa)). ATP-binding positions include 122 to 126 (STRVR) and His185. An L-arginine-binding site is contributed by Glu225. ATP is bound at residue Arg229. An L-arginine-binding site is contributed by Cys271. Residues 280 to 284 (RASVH) and 309 to 314 (RGTRGE) contribute to the ATP site. Glu314 serves as a coordination point for L-arginine.

The protein belongs to the ATP:guanido phosphotransferase family.

The enzyme catalyses L-arginine + ATP = N(omega)-phospho-L-arginine + ADP + H(+). The chain is Arginine kinase from Homarus gammarus (European lobster).